An 83-amino-acid polypeptide reads, in one-letter code: Greglin (83 aa).

3 positions are modified to phosphoserine: S8, S11, and S15. Intrachain disulfides connect C21-C55, C25-C48, C33-C69, and C53-C76.

In terms of biological role, serine protease inhibitor. Inhibits porcine pancreatic elastase with a Ki of 58.3 nM, human neutrophil elastase with a Ki of 3.6 nM, cathepsin G with a Ki of 153.5 nM, chymotrypsin with a Ki of 26.7 nM and subtilisin with a Ki of 0.68 nM. Does not inhibit neutrophil protease 3 or pancreatic trypsin. The protein is Greglin of Schistocerca gregaria (Desert locust).